Reading from the N-terminus, the 282-residue chain is Pantothenate synthetase (282 aa).

Residue Met-30–His-37 coordinates ATP. The Proton donor role is filled by His-37. Gln-61 is a binding site for (R)-pantoate. A beta-alanine-binding site is contributed by Gln-61. Gly-147–Asp-150 contacts ATP. Gln-153 contacts (R)-pantoate. ATP contacts are provided by residues Val-176 and Met-184 to Arg-187.

Belongs to the pantothenate synthetase family. In terms of assembly, homodimer.

It is found in the cytoplasm. The catalysed reaction is (R)-pantoate + beta-alanine + ATP = (R)-pantothenate + AMP + diphosphate + H(+). The protein operates within cofactor biosynthesis; (R)-pantothenate biosynthesis; (R)-pantothenate from (R)-pantoate and beta-alanine: step 1/1. Functionally, catalyzes the condensation of pantoate with beta-alanine in an ATP-dependent reaction via a pantoyl-adenylate intermediate. The chain is Pantothenate synthetase from Pelotomaculum thermopropionicum (strain DSM 13744 / JCM 10971 / SI).